The primary structure comprises 449 residues: Tubulin alpha chain (449 aa).

GTP-binding residues include glutamine 11, glutamate 71, serine 140, glycine 144, threonine 145, threonine 179, asparagine 206, and asparagine 228. Glutamate 71 provides a ligand contact to Mg(2+). Glutamate 254 is an active-site residue.

The protein belongs to the tubulin family. As to quaternary structure, dimer of alpha and beta chains. A typical microtubule is a hollow water-filled tube with an outer diameter of 25 nm and an inner diameter of 15 nM. Alpha-beta heterodimers associate head-to-tail to form protofilaments running lengthwise along the microtubule wall with the beta-tubulin subunit facing the microtubule plus end conferring a structural polarity. Microtubules usually have 13 protofilaments but different protofilament numbers can be found in some organisms and specialized cells. Mg(2+) is required as a cofactor.

It localises to the cytoplasm. The protein localises to the cytoskeleton. It catalyses the reaction GTP + H2O = GDP + phosphate + H(+). In terms of biological role, tubulin is the major constituent of microtubules, a cylinder consisting of laterally associated linear protofilaments composed of alpha- and beta-tubulin heterodimers. Microtubules grow by the addition of GTP-tubulin dimers to the microtubule end, where a stabilizing cap forms. Below the cap, tubulin dimers are in GDP-bound state, owing to GTPase activity of alpha-tubulin. The polypeptide is Tubulin alpha chain (TUB1) (Pneumocystis carinii).